The primary structure comprises 313 residues: Protein MFI (313 aa).

In terms of assembly, can homodimerize. Interacts with MFF; the interaction inhibits MFF interaction with DNM1L. Enriched in the pancreatic beta cell and the testis and is expressed at low levels in other tissues tested.

It is found in the cytoplasm. Its subcellular location is the cytosol. The protein localises to the mitochondrion outer membrane. In terms of biological role, acts as an inhibitor of mitochondrial fission. Interacts with MFF and prevents DNM1L recruitment to mitochondria, promoting a more fused mitochondrial network. The protein is Protein MFI of Homo sapiens (Human).